Here is a 421-residue protein sequence, read N- to C-terminus: MFNRDMNIADYDPELWQSITDEVQRQEDHIELIASENYTSPRVMEAQGSQLTNKYAEGYPGKRYYGGCEYVDVAESLAIERAKSLFGADYANVQPHSGSQANAAVYQALCAPGDTILGMSLAHGGHLTHGSHVSFSGKMYNAVQYGITPETGILDYAEIERLAVEHKPTMIIAGFSAYSGIVDWAKFREIADKVGAYLFVDMAHVAGLVAAGLYPNPVPFADVVTTTTHKTLGGPRGGLILAKANEAIEKKLNSAVFPGQQGGPLMHVIAAKAVAFKECAEPEFAVYQQQVLDNAKAMVKSFLARGYKIVSGGTENHLFLVDLIAQDITGKEADAALGNAHITVNKNSVPNDPRSPFVTSGLRIGTPALARRGVNAQQSAELALWMCDVLDAIKDEAKLATTITAVKVKVAALCKACPVYG.

(6S)-5,6,7,8-tetrahydrofolate contacts are provided by residues L121 and 125–127 (GHL). Position 230 is an N6-(pyridoxal phosphate)lysine (K230). 355–357 (SPF) provides a ligand contact to (6S)-5,6,7,8-tetrahydrofolate.

It belongs to the SHMT family. As to quaternary structure, homodimer. Requires pyridoxal 5'-phosphate as cofactor.

It localises to the cytoplasm. It carries out the reaction (6R)-5,10-methylene-5,6,7,8-tetrahydrofolate + glycine + H2O = (6S)-5,6,7,8-tetrahydrofolate + L-serine. It participates in one-carbon metabolism; tetrahydrofolate interconversion. It functions in the pathway amino-acid biosynthesis; glycine biosynthesis; glycine from L-serine: step 1/1. Catalyzes the reversible interconversion of serine and glycine with tetrahydrofolate (THF) serving as the one-carbon carrier. This reaction serves as the major source of one-carbon groups required for the biosynthesis of purines, thymidylate, methionine, and other important biomolecules. Also exhibits THF-independent aldolase activity toward beta-hydroxyamino acids, producing glycine and aldehydes, via a retro-aldol mechanism. The protein is Serine hydroxymethyltransferase of Psychromonas ingrahamii (strain DSM 17664 / CCUG 51855 / 37).